We begin with the raw amino-acid sequence, 161 residues long: Large ribosomal subunit protein bL9 (161 aa).

The protein belongs to the bacterial ribosomal protein bL9 family.

In terms of biological role, binds to the 23S rRNA. The sequence is that of Large ribosomal subunit protein bL9 from Protochlamydia amoebophila (strain UWE25).